Reading from the N-terminus, the 371-residue chain is Bifunctional enzyme IspD/IspF (371 aa).

The interval 1 to 210 is 2-C-methyl-D-erythritol 4-phosphate cytidylyltransferase; sequence MLDISLIMLS…LNLPKPSWDI (210 aa). The tract at residues 211–371 is 2-C-methyl-D-erythritol 2,4-cyclodiphosphate synthase; sequence FNGNGFDVHE…NLKYFDWMKL (161 aa). Residues aspartate 217 and histidine 219 each contribute to the a divalent metal cation site. 4-CDP-2-C-methyl-D-erythritol 2-phosphate contacts are provided by residues 217–219 and 243–244; these read DVH and HS. Histidine 251 provides a ligand contact to a divalent metal cation. 4-CDP-2-C-methyl-D-erythritol 2-phosphate-binding positions include 265 to 267, 270 to 274, 341 to 344, phenylalanine 348, and arginine 351; these read DIG, FPDND, and TTTE.

The protein in the N-terminal section; belongs to the IspD/TarI cytidylyltransferase family. IspD subfamily. In the C-terminal section; belongs to the IspF family. The cofactor is a divalent metal cation.

It catalyses the reaction 2-C-methyl-D-erythritol 4-phosphate + CTP + H(+) = 4-CDP-2-C-methyl-D-erythritol + diphosphate. The catalysed reaction is 4-CDP-2-C-methyl-D-erythritol 2-phosphate = 2-C-methyl-D-erythritol 2,4-cyclic diphosphate + CMP. It functions in the pathway isoprenoid biosynthesis; isopentenyl diphosphate biosynthesis via DXP pathway; isopentenyl diphosphate from 1-deoxy-D-xylulose 5-phosphate: step 2/6. It participates in isoprenoid biosynthesis; isopentenyl diphosphate biosynthesis via DXP pathway; isopentenyl diphosphate from 1-deoxy-D-xylulose 5-phosphate: step 4/6. In terms of biological role, bifunctional enzyme that catalyzes the formation of 4-diphosphocytidyl-2-C-methyl-D-erythritol from CTP and 2-C-methyl-D-erythritol 4-phosphate (MEP) (IspD), and catalyzes the conversion of 4-diphosphocytidyl-2-C-methyl-D-erythritol 2-phosphate (CDP-ME2P) to 2-C-methyl-D-erythritol 2,4-cyclodiphosphate (ME-CPP) with a corresponding release of cytidine 5-monophosphate (CMP) (IspF). This chain is Bifunctional enzyme IspD/IspF, found in Campylobacter lari (strain RM2100 / D67 / ATCC BAA-1060).